The chain runs to 555 residues: Vacuolar fusion protein MON1 homolog A (555 aa).

The segment covering 1-12 (MAADMQRKRSSE) has biased composition (basic and acidic residues). The segment at 1 to 87 (MAADMQRKRS…RGPPPLPADM (87 aa)) is disordered. A phosphoserine mark is found at S31 and S56. The residue at position 61 (T61) is a Phosphothreonine. A Phosphoserine modification is found at S91. The segment at 114–147 (PGSSEDWLDPPGAVGRPATEPPREGTAEGDEEDA) is disordered.

This sequence belongs to the MON1/SAND family. In terms of assembly, interacts with CCZ1. Found in a complex with RMC1, CCZ1, MON1A and MON1B. The MON1A-CCZ1B complex interacts with RIMOC1. The MON1A-CCZ1B complex interacts with RAB7A and this interaction is enhanced in the presence of RIMOC1.

Its function is as follows. Plays an important role in membrane trafficking through the secretory apparatus. Not involved in endocytic trafficking to lysosomes. Acts in concert with CCZ1, as a guanine exchange factor (GEF) for RAB7, promotes the exchange of GDP to GTP, converting it from an inactive GDP-bound form into an active GTP-bound form. The protein is Vacuolar fusion protein MON1 homolog A (MON1A) of Macaca fascicularis (Crab-eating macaque).